A 167-amino-acid chain; its full sequence is MKKIRIGQGFDIHQLAAGRELVIGGVTIPYEKGLLGHSDADVLLHALCDALLGAAALGDIGKHFSDTDARYKDIDSRKLVCKVHRLLAETGYRVVNIDATIIAQAPKMAPHISGMIANIAQDLAMPAGNINIKAKTAEKLGAVGRGEGIVAEVVCLIANSDEGEAQP.

Residues aspartate 11 and histidine 13 each contribute to the a divalent metal cation site. Residues 11–13 (DIH) and 37–38 (HS) contribute to the 4-CDP-2-C-methyl-D-erythritol 2-phosphate site. An a divalent metal cation-binding site is contributed by histidine 45. 4-CDP-2-C-methyl-D-erythritol 2-phosphate is bound by residues 59 to 61 (DIG), 64 to 68 (FSDTD), 103 to 109 (AQAPKMA), and arginine 145.

The protein belongs to the IspF family. In terms of assembly, homotrimer. It depends on a divalent metal cation as a cofactor.

It carries out the reaction 4-CDP-2-C-methyl-D-erythritol 2-phosphate = 2-C-methyl-D-erythritol 2,4-cyclic diphosphate + CMP. It functions in the pathway isoprenoid biosynthesis; isopentenyl diphosphate biosynthesis via DXP pathway; isopentenyl diphosphate from 1-deoxy-D-xylulose 5-phosphate: step 4/6. Its function is as follows. Involved in the biosynthesis of isopentenyl diphosphate (IPP) and dimethylallyl diphosphate (DMAPP), two major building blocks of isoprenoid compounds. Catalyzes the conversion of 4-diphosphocytidyl-2-C-methyl-D-erythritol 2-phosphate (CDP-ME2P) to 2-C-methyl-D-erythritol 2,4-cyclodiphosphate (ME-CPP) with a corresponding release of cytidine 5-monophosphate (CMP). In Nitrosomonas eutropha (strain DSM 101675 / C91 / Nm57), this protein is 2-C-methyl-D-erythritol 2,4-cyclodiphosphate synthase.